A 103-amino-acid polypeptide reads, in one-letter code: Cystatin-A1 (103 aa).

The Secondary area of contact signature appears at 51 to 55 (QVVAG).

This sequence belongs to the cystatin family.

It localises to the cytoplasm. Its function is as follows. This is an intracellular thiol proteinase inhibitor. The polypeptide is Cystatin-A1 (Sus scrofa (Pig)).